We begin with the raw amino-acid sequence, 686 residues long: MGCFCAVPEEFYCEVLLLDESKLTLTTQQQGIKKSTKGSVVLDHVFRHINLVEIDYFGLRYCDRSHQTYWLDPAKTLAEHKELINTGPPYTLYFGIKFYAEDPCKLKEEITRYQFFLQVKQDALQGRLPCPVNIAAQMGAYAIQAELGDHDPYKHTAGYVSEYRFVPDQKEELEEAIERIHKTLMGQAPSEAELNYLRTAKSLEMYGVDLHPVYGENKSEYFLGLTPSGVVVYKNKKQVGKYFWPRITKVHFKETQFELRVLGKDCNETSFFFEARSKTACKHLWKCSVEHHTFFRMPDTESNSLSRKLSKFGSISYKHRYSGRTALQMSRDLSIQLPRPNQNVVRSRSKTYPKRVAQTQPTGSNNINRITANTENGENEGTTKIIAPSPVKSFKKAKNENSPDPQRSKSHAPWEENGPQSGLYNSSSDRTKSPKFPCARQRNLSCGSDNDSSQLMRRRKAHNSGEDSDLKQRRRSRSRCNTSSGSESENSNREHRKKRNRTRQENDMVDSGPQWEAVLRRQKEKNQADPNNRRSRHRSRSRSPDIQAKEELWKHIQKELVDPSGLSEEQLKEIPYTKVETQGDPVRIRHSHSPRSYRQYRRSQCSDGERSVLSEVNSKTDLVPPLPVTRSSDAQGSGGSTVHQRRNGSKDSLIEEKSQLSTINPAGKPTAKTIKTIQAARLKAET.

In terms of domain architecture, FERM spans 11–299 (FYCEVLLLDE…EHHTFFRMPD (289 aa)). Serine 304 carries the post-translational modification Phosphoserine. Polar residues-rich tracts occupy residues 332–346 (DLSI…NVVR) and 357–382 (AQTQ…NEGT). Positions 332-669 (DLSIQLPRPN…LSTINPAGKP (338 aa)) are disordered. Phosphoserine is present on residues serine 389, serine 393, and serine 402. 2 stretches are compositionally biased toward polar residues: residues 418–428 (GPQSGLYNSSS) and 442–455 (RNLS…SSQL). Over residues 479–489 (RCNTSSGSESE) the composition is skewed to low complexity. 2 stretches are compositionally biased toward basic and acidic residues: residues 518 to 527 (VLRRQKEKNQ) and 547 to 561 (QAKE…KELV). Residues 588–601 (IRHSHSPRSYRQYR) are compositionally biased toward basic residues. The segment covering 648–658 (GSKDSLIEEKS) has biased composition (basic and acidic residues).

As to expression, brain, heart, lung, liver and spleen. Not detected in thymus and kidney.

The protein localises to the cytoplasm. The protein resides in the cytoskeleton. This is Band 4.1-like protein 4A from Mus musculus (Mouse).